Here is a 253-residue protein sequence, read N- to C-terminus: Large ribosomal subunit protein uL4 (253 aa).

Residues 62 to 107 (WGSGRGVSHVPRLKNSSRAARVPHAKGGRRAHPPKPEADRSEKVNT) form a disordered region. Basic residues predominate over residues 82–94 (RVPHAKGGRRAHP). Residues 95–107 (PKPEADRSEKVNT) are compositionally biased toward basic and acidic residues.

Belongs to the universal ribosomal protein uL4 family. In terms of assembly, part of the 50S ribosomal subunit.

In terms of biological role, one of the primary rRNA binding proteins, this protein initially binds near the 5'-end of the 23S rRNA. It is important during the early stages of 50S assembly. It makes multiple contacts with different domains of the 23S rRNA in the assembled 50S subunit and ribosome. Forms part of the polypeptide exit tunnel. The protein is Large ribosomal subunit protein uL4 of Methanosarcina mazei (strain ATCC BAA-159 / DSM 3647 / Goe1 / Go1 / JCM 11833 / OCM 88) (Methanosarcina frisia).